The following is a 102-amino-acid chain: Protamine-2 (102 aa).

The segment at 1 to 102 (MVRYRMRSLS…RTRRRRCRRH (102 aa)) is disordered. Phosphoserine is present on residues Ser-8 and Ser-10. The segment covering 8–17 (SLSERSHEVH) has biased composition (basic and acidic residues). A compositionally biased stretch (low complexity) spans 18 to 29 (GQQVHGQDQGHN). Positions 39–48 (EHVEVYERTH) are enriched in basic and acidic residues. Basic residues predominate over residues 49-102 (GHSHYRRRHCSRRRLHRIHRRRHRSCRRRRRRSCRHRRRHRRGCRTRRRRCRRH).

The protein belongs to the protamine P2 family. In terms of assembly, interacts with TDRP. Proteolytic processing into mature chains is required for histone eviction during spermatogenesis. Transition proteins (TNP1 and TNP2) are required for processing. As to expression, testis.

It localises to the nucleus. Its subcellular location is the chromosome. Protamines substitute for histones in the chromatin of sperm during the haploid phase of spermatogenesis. They compact sperm DNA into a highly condensed, stable and inactive complex. In Macaca mulatta (Rhesus macaque), this protein is Protamine-2 (PRM2).